We begin with the raw amino-acid sequence, 2313 residues long: Voltage-dependent R-type calcium channel subunit alpha-1E (2313 aa).

Residues 1 to 38 are disordered; it reads MARFGEAVVARPGSGDGDSDQSRNRQGTPVPASGQAAA. At 1-89 the chain is on the cytoplasmic side; it reads MARFGEAVVA…KYAKKLIDWP (89 aa). Phosphoserine occurs at positions 14 and 19. One copy of the I repeat lies at 76–354; that stretch reads NIVRKYAKKL…LVLGVLSGEF (279 aa). A helical transmembrane segment spans residues 90 to 108; the sequence is PFEYMILATIIANCIVLAL. Over 109-127 the chain is Extracellular; the sequence is EQHLPEDDKTPMSRRLEKT. A helical membrane pass occupies residues 128 to 146; that stretch reads EPYFIGIFCFEAGIKIVAL. The Cytoplasmic portion of the chain corresponds to 147 to 158; that stretch reads GFIFHKGSYLRN. The helical transmembrane segment at 159–173 threads the bilayer; sequence GWNVMDFIVVLSGIL. Residues 174–185 lie on the Extracellular side of the membrane; that stretch reads ATAGTHFNTHVD. A helical transmembrane segment spans residues 186–205; sequence LRTLRAVRVLRPLKLVSGIP. Residues 206 to 223 lie on the Cytoplasmic side of the membrane; sequence SLQIVLKSIMKAMVPLLQ. A helical transmembrane segment spans residues 224–244; the sequence is IGLLLFFAILMFAIIGLEFYS. The Extracellular portion of the chain corresponds to 245 to 326; sequence GKLHRACFMN…NTNDALGATW (82 aa). The N-linked (GlcNAc...) asparagine glycan is linked to Asn-254. Residues 327–350 form a helical membrane-spanning segment; it reads NWLYFIPLIIIGSFFVLNLVLGVL. Topologically, residues 351 to 476 are cytoplasmic; sequence SGEFAKERER…ISIRHMVKSQ (126 aa). The tract at residues 374–391 is binding to the beta subunit; the sequence is QQIERELNGYRAWIDKAE. Residue Asp-426 participates in Ca(2+) binding. A Phosphoserine modification is found at Ser-427. 3 residues coordinate Ca(2+): Ser-428, Glu-430, and Cys-432. Thr-440 is subject to Phosphothreonine. One copy of the II repeat lies at 462-706; it reads ERLLRISIRH…VFLAIAVDNL (245 aa). Residues 477 to 496 form a helical membrane-spanning segment; that stretch reads VFYWIVLSLVALNTACVAIV. Residues 497–509 lie on the Extracellular side of the membrane; that stretch reads HHNQPQWLTHLLY. Residues 510–529 traverse the membrane as a helical segment; that stretch reads YAEFLFLGLFLLEMSLKMYG. Over 530 to 538 the chain is Cytoplasmic; sequence MGPRLYFHS. A helical transmembrane segment spans residues 539-557; sequence SFNCFDFGVTVGSIFEVVW. Residues 558 to 567 lie on the Extracellular side of the membrane; that stretch reads AIFRPGTSFG. The chain crosses the membrane as a helical span at residues 568–586; sequence ISVLRALRLLRIFKITKYW. At 587 to 605 the chain is on the cytoplasmic side; it reads ASLRNLVVSLMSSMKSIIS. Residues 606–625 form a helical membrane-spanning segment; the sequence is LLFLLFLFIVVFALLGMQLF. The Extracellular segment spans residues 626 to 678; the sequence is GGRFNFNDGTPSANFDTFPAAIMTVFQILTGEDWNEVMYNGIRSQGGVSSGMW. The chain crosses the membrane as a helical span at residues 679–703; sequence SAIYFIVLTLFGNYTLLNVFLAIAV. Topologically, residues 704 to 1148 are cytoplasmic; sequence DNLANAQELT…TNPIRRACHY (445 aa). The segment at 729-774 is disordered; it reads LQKAKEVSPMSAPNMPSIERDRRRRHHMSMWEPRSSHLRERRRRHH. Phosphoserine occurs at positions 736, 745, 793, 815, and 855. The interval 851–984 is disordered; the sequence is SRGGSLKGDG…EERAQDLRRT (134 aa). Positions 866–875 are enriched in polar residues; sequence ALDNQRTPLS. Positions 913 to 926 are enriched in basic residues; that stretch reads RHRQSQRRSRHRRV. Over residues 933–945 the composition is skewed to low complexity; the sequence is SSSASRSRSASQE. Ser-947 is subject to Phosphoserine. Residues 955–983 show a composition bias toward basic and acidic residues; the sequence is EGEKDHELRGNHGAKEPTIQEERAQDLRR. A Phosphoserine modification is found at Ser-1097. Positions 1103–1125 are disordered; it reads EIREDEEEVEKKKQKKEKRETGK. Residues 1140-1426 form an III repeat; that stretch reads NPIRRACHYI…IFVALIIITF (287 aa). Residues 1149-1165 traverse the membrane as a helical segment; that stretch reads IVNLRYFEMCILLVIAA. The Extracellular portion of the chain corresponds to 1166–1189; it reads SSIALAAEDPVLTNSERNKVLRYF. A helical transmembrane segment spans residues 1190 to 1209; sequence DYVFTGVFTFEMVIKMIDQG. At 1210–1217 the chain is on the cytoplasmic side; that stretch reads LILQDGSY. The chain crosses the membrane as a helical span at residues 1218–1240; that stretch reads FRDLWNILDFVVVVGALVAFALA. Residues 1241–1254 lie on the Extracellular side of the membrane; the sequence is NALGTNKGRDIKTI. Residues 1255–1272 traverse the membrane as a helical segment; it reads KSLRVLRVLRPLKTIKRL. At 1273-1291 the chain is on the cytoplasmic side; sequence PKLKAVFDCVVTSLKNVFN. Residues 1292–1311 traverse the membrane as a helical segment; it reads ILIVYKLFMFIFAVIAVQLF. At 1312-1398 the chain is on the extracellular side; the sequence is KGKFFYCTDS…RGPSRSNRME (87 aa). The chain crosses the membrane as a helical span at residues 1399-1422; that stretch reads MSIFYVVYFVVFPFFFVNIFVALI. Over 1423–1479 the chain is Cytoplasmic; it reads IITFQEQGDKMMEECSLEKNERACIDFAISAKPLTRYMPQNRHTFQYRVWHFVVSPS. The IV repeat unit spans residues 1463–1726; that stretch reads NRHTFQYRVW…LFVAVIMDNF (264 aa). The chain crosses the membrane as a helical span at residues 1480-1498; that stretch reads FEYTIMAMIALNTVVLMMK. Residues 1499-1513 are Extracellular-facing; sequence YYSAPCTYELALKYL. The helical transmembrane segment at 1514–1533 threads the bilayer; that stretch reads NIAFTMVFSLECVLKVIAFG. Topologically, residues 1534-1541 are cytoplasmic; that stretch reads FLNYFRDT. A helical transmembrane segment spans residues 1542–1560; it reads WNIFDFITVIGSITEIILT. Over 1561–1571 the chain is Extracellular; it reads DSKLVNTSGFN. 2 N-linked (GlcNAc...) asparagine glycosylation sites follow: Asn-1566 and Asn-1571. A helical transmembrane segment spans residues 1572-1590; it reads MSFLKLFRAARLIKLLRQG. Residues 1591–1609 are Cytoplasmic-facing; the sequence is YTIRILLWTFVQSFKALPY. Residues 1610 to 1629 form a helical membrane-spanning segment; sequence VCLLIAMLFFIYAIIGMQVF. Topologically, residues 1630–1698 are extracellular; it reads GNIKLDEESH…NENERCGTDL (69 aa). The helical transmembrane segment at 1699–1724 threads the bilayer; that stretch reads AYVYFVSFIFFCSFLMLNLFVAVIMD. The Cytoplasmic segment spans residues 1725 to 2313; it reads NFEYLTRDSS…LSDTEEDDKC (589 aa). The region spanning 1739-1774 is the EF-hand domain; the sequence is HHLDEFVRVWAEYDRAACGRIHYTEMYEMLTLMSPP. Residues Asp-1752, Arg-1758, and Glu-1763 each contribute to the Ca(2+) site. Disordered regions lie at residues 1970 to 2170, 2206 to 2225, and 2263 to 2295; these read VSEL…RPLL, CLTE…ASPQ, and SNTI…GPGM. Residues 2012-2023 show a composition bias toward polar residues; that stretch reads TDPSSMRRSFST. A compositionally biased stretch (low complexity) spans 2055–2064; the sequence is HSSLRLSAHR. Residues 2065–2085 are compositionally biased toward basic and acidic residues; sequence LNSDSGHKSDTHRSGGRERGR. Phosphoserine is present on residues Ser-2094 and Ser-2113. Over residues 2101–2118 the composition is skewed to basic and acidic residues; that stretch reads NSEERGTQADWESPERRQ. A compositionally biased stretch (polar residues) spans 2129–2152; sequence TPNRQGTGSLSESSIPSVSDTSTP. Residues 2210–2225 are compositionally biased toward low complexity; the sequence is SSNSPHPQQSQHASPQ.

The protein belongs to the calcium channel alpha-1 subunit (TC 1.A.1.11) family. CACNA1E subfamily. As to quaternary structure, interacts with EFHC1. Voltage-dependent calcium channels are multisubunit complexes, consisting of alpha-1, alpha-2, beta and delta subunits in a 1:1:1:1 ratio. The channel activity is directed by the pore-forming and voltage-sensitive alpha-1 subunit. In many cases, this subunit is sufficient to generate voltage-sensitive calcium channel activity. The auxiliary subunits beta and alpha-2/delta linked by a disulfide bridge regulate the channel activity. Expressed in neuronal tissues and in kidney.

It localises to the membrane. The enzyme catalyses Ca(2+)(in) = Ca(2+)(out). Its function is as follows. Voltage-sensitive calcium channels (VSCC) mediate the entry of calcium ions into excitable cells. They are also involved in a variety of calcium-dependent processes, including muscle contraction, hormone or neurotransmitter release, gene expression, cell motility, cell division and cell death. The isoform alpha-1E gives rise to R-type calcium currents. R-type calcium channels belong to the 'high-voltage activated' (HVA) group and are blocked by nickel. They are however insensitive to dihydropyridines (DHP). Calcium channels containing alpha-1E subunit could be involved in the modulation of firing patterns of neurons which is important for information processing. Voltage-sensitive calcium channels (VSCC) mediate the entry of calcium ions into excitable cells. They are also involved in a variety of calcium-dependent processes, including muscle contraction, hormone or neurotransmitter release, gene expression, cell motility, cell division and cell death. The isoform alpha-1E gives rise to R-type calcium currents. The polypeptide is Voltage-dependent R-type calcium channel subunit alpha-1E (CACNA1E) (Homo sapiens (Human)).